The sequence spans 344 residues: GPALPP motifs-containing protein 1 (344 aa).

The interval 1–309 is disordered; sequence MARDLIGPAL…QERIPFDRDK (309 aa). At Ala2 the chain carries N-acetylalanine. Residues 7-12 carry the GPALPP motif 1 motif; sequence GPALPP. Ser28 is modified (phosphoserine). Positions 30–35 match the GPALPP motif 2 motif; the sequence is GPALPP. Composition is skewed to acidic residues over residues 58–67 and 80–93; these read GNQESEEDDT and DDND…DDDG. The GPALPP motif 3 motif lies at 96 to 101; sequence GPALPP. Ser109 carries the phosphoserine modification. Over residues 111–120 the composition is skewed to pro residues; that stretch reads PRPIIGPALP. The GPALPP motif 4 motif lies at 116–121; the sequence is GPALPP. Over residues 128 to 137 the composition is skewed to basic and acidic residues; it reads QKSDKGRDDP. Thr142 carries the post-translational modification Phosphothreonine. Phosphoserine occurs at positions 144 and 145. Composition is skewed to basic and acidic residues over residues 167 to 191, 231 to 265, 273 to 283, and 291 to 309; these read EFEK…KPIV, PADR…KRLA, ESKRSESLMDI, and KAAE…DRDK. Lys275 is covalently cross-linked (Glycyl lysine isopeptide (Lys-Gly) (interchain with G-Cter in SUMO2)). Lys312 participates in a covalent cross-link: Glycyl lysine isopeptide (Lys-Gly) (interchain with G-Cter in SUMO2).

In Pongo abelii (Sumatran orangutan), this protein is GPALPP motifs-containing protein 1 (GPALPP1).